A 189-amino-acid polypeptide reads, in one-letter code: MAVYSTNEFKNGLKVMVDDAPCSILDCEFVKPGKGQAFTRIKIRNLKTGRVVERTFKSGDTLPSADVADVEMQYLYNDGEHWHFMVPDTFEQYAVTENILADAAQWLKEQDVCVVTLWNNEPIQVTPPNFVILAITETDPGLKGDTSGGGGKPATLETGAVVRVPLFVQTGELIKVDTRKGEYVSRAKE.

Position 34 is an N6-(3,6-diaminohexanoyl)-5-hydroxylysine (Lys-34).

The protein belongs to the elongation factor P family. Post-translationally, may be beta-lysylated on the epsilon-amino group of Lys-34 by the combined action of EpmA and EpmB, and then hydroxylated on the C5 position of the same residue by EpmC (if this protein is present). Lysylation is critical for the stimulatory effect of EF-P on peptide-bond formation. The lysylation moiety may extend toward the peptidyltransferase center and stabilize the terminal 3-CCA end of the tRNA. Hydroxylation of the C5 position on Lys-34 may allow additional potential stabilizing hydrogen-bond interactions with the P-tRNA.

Its subcellular location is the cytoplasm. The protein operates within protein biosynthesis; polypeptide chain elongation. Functionally, involved in peptide bond synthesis. Alleviates ribosome stalling that occurs when 3 or more consecutive Pro residues or the sequence PPG is present in a protein, possibly by augmenting the peptidyl transferase activity of the ribosome. Modification of Lys-34 is required for alleviation. This is Elongation factor P from Legionella pneumophila (strain Lens).